We begin with the raw amino-acid sequence, 139 residues long: MTDEDRLLPIANVGRLMKQILPSNAKISKEAKQTVQECATEFISFVTCEASEKCHRENRKTVNGDDIWWALSTLGLDNYADAVGRHLHKYREAERERTEHNKGSNDSGNEKETNTRSDVQNQSTKFIRVVEKGSSSSAR.

Residues 8-14 mediate DNA binding; the sequence is LPIANVG. Positions 35–46 are subunit association domain (SAD); sequence VQECATEFISFV. Residues 90 to 115 are compositionally biased toward basic and acidic residues; it reads YREAERERTEHNKGSNDSGNEKETNT. The interval 90–139 is disordered; sequence YREAERERTEHNKGSNDSGNEKETNTRSDVQNQSTKFIRVVEKGSSSSAR. A compositionally biased stretch (polar residues) spans 116-125; the sequence is RSDVQNQSTK.

It belongs to the NFYB/HAP3 subunit family. Heterotrimeric transcription factor composed of three components, NF-YA, NF-YB and NF-YC. NF-YB and NF-YC must interact and dimerize for NF-YA association and DNA binding. As to expression, expressed in flowers, siliques and young rosettes.

The protein resides in the nucleus. Its function is as follows. Component of the NF-Y/HAP transcription factor complex. The NF-Y complex stimulates the transcription of various genes by recognizing and binding to a CCAAT motif in promoters. The sequence is that of Nuclear transcription factor Y subunit B-4 (NFYB4) from Arabidopsis thaliana (Mouse-ear cress).